We begin with the raw amino-acid sequence, 439 residues long: Forkhead box protein J1-B (439 aa).

The fork-head DNA-binding region spans 124-218; that stretch reads KPPYSYATLI…MNGAMKKRRL (95 aa).

It belongs to the FOXJ1 family.

The protein localises to the nucleus. Its function is as follows. Key transcription factor required for motile ciliogenesis. Activates genes essential for motile cilia formation and function. This chain is Forkhead box protein J1-B (foxj1-b), found in Xenopus laevis (African clawed frog).